Here is a 519-residue protein sequence, read N- to C-terminus: Cell adhesion molecule CEACAM1 (519 aa).

An N-terminal signal peptide occupies residues Met1–Ala34. Gln35 carries the post-translational modification Pyrrolidone carboxylic acid. At Gln35 to Ala425 the chain is on the extracellular side. The segment at Asp39–Pro142 is required for homophilic binding. The Ig-like V-type domain occupies Pro42–Val140. N-linked (GlcNAc...) asparagine glycans are attached at residues Asn87, Asn104, Asn113, Asn148, Asn152, Asn173, Asn197, Asn224, Asn256, Asn288, Asn292, Asn302, Asn315, and Asn331. Ig-like C2-type domains are found at residues Pro147 to Asp232, Pro237 to Thr317, and Pro325 to Ser403. An intrachain disulfide couples Cys167 to Cys215. A disulfide bridge connects residues Cys259 and Cys299. An intrachain disulfide couples Cys344 to Cys392. The N-linked (GlcNAc...) asparagine; atypical glycan is linked to Asn374. The helical transmembrane segment at Ile426–Phe446 threads the bilayer. An interaction with calmodulin region spans residues Tyr445–Asp457. The Cytoplasmic portion of the chain corresponds to Leu447–Lys519. Residues Leu447–Lys519 are interaction with FLNA. The disordered stretch occupies residues Gly455–Lys519. Positions Ser456–Pro466 are enriched in basic and acidic residues. Positions Asp484 to Lys519 are required for interaction with PTPN11 and PTPN6 and for control of phosphorylation level. The residue at position 488 (Tyr488) is a Phosphotyrosine; by SRC, LCK, INSR and EGFR. The segment covering Ser489 to Val512 has biased composition (polar residues). Position 503 is a phosphoserine (Ser503). Residue Tyr513 is modified to Phosphotyrosine; by INSR, SRC and LCK. An essential for interaction with PTPN11 and PTPN6 region spans residues Tyr513 to Val516.

Belongs to the immunoglobulin superfamily. CEA family. As to quaternary structure, monomer. Oligomer. Heterodimer. Homodimer. Cis-dimer/oligomer (via Ig-like C2-type and/or via cytoplasmic domains); induced by trans-homophilic cell adhesion through an allosteric mechanism transmitted by the Ig-like V-type domain, and is regulated by intracellular calcium and calmodulin. Interacts (via cytoplasmic domain) with calmodulin in a calcium dependent manner; reduces homophilic cell adhesion through dissociation of dimer. Isoform 1 interacts (via cytoplasmic domain) with PTPN11 (preferentially) and PTPN6; cis-homodimer form is preferred; this interaction is decreased by formation of isoform 1 / isoform 2 cis-heterodimers and is dependent on the monomer/dimer equilibrium; this interaction is phosphorylation-dependent. Isoform 1 interacts with LYN. Isoform 1 interacts (via cytoplasmic domain) with SRC (via SH2 domain); this interaction is regulated by trans-homophilic cell adhesion. Isoform 1 interacts (via cytoplasmic domain) with LCK; mediates phosphorylation at Tyr-488 and Tyr-513 resulting in PTPN6 association. Isoform 1 interacts with PTPN6; this interaction is phosphorylation-dependent and causes a profound decrease in TCR stimulation-induced CD247 and ZAP70 phosphorylation. Isoform 1 interacts with TCR/CD3 complex through TCR beta chain and CD3E; colocalizes at the cell surface and upon stimulation of the TCR/CD3 complex recruits PTPN6 in the TCR/CD3 complex, resulting in dephosphorylation of CD247 and ZAP70. Isoform 1 interacts (via cytoplasmic domain) with SHC1 (via SH2 domain); SHC1 mediates interaction with INSR or EGFR in a Ser-503 phosphorylation-dependent manner. Isoform 1 interacts with EGFR; the interaction is indirect. Isoform 1 interacts with CSF3R; down-regulates the CSF3R-STAT3 pathway through recruitment of PTPN6 that dephosphorylates CSF3R. Isoform 1 (phosphorylated form) interacts with TLR4 and SYK; recruits PTPN6 that dephosphorylates SYK, reducing the production of reactive oxygen species (ROS) and lysosome disruption, leading to a reduction of the inflammasome activity. Isoform 1 interacts with FLNA; inhibits cell migration and cell scattering by interfering with the interaction of FLNA with RALA. Isoform 1 interacts (via cytoplasmic domain) with PXN; the interaction is phosphotyrosyl-dependent. Isoform 1 interacts with KLRK1; recruits PTPN6 that dephosphorylates VAV1. Isoform 1 interacts with CEACAM8. Isoform 1 interacts with FASN; this interaction is insulin and phosphorylation-dependent; reduces fatty-acid synthase activity. Interacts (via Ig-like V-type) with HAVCR2 (via Ig-like V-type); facilitates the maturation and cell surface expression of HAVCR2 thereby regulating T-cell tolerance induction. Isoform 2 interacts (via the cytoplasmic domain) with ANXA2; this interaction is regulated by phosphorylation and appears in the AIIt complex. Interacts (via Lewis X moieties) with CD209 (via C-type lectin domain); this interaction is regulated by the glycosylation pattern of CEACAM1 on cell types and regulates contact between dendritic cells and neutrophils. Post-translationally, phosphorylated on serine and tyrosine. Isoform 1 is phosphorylated on tyrosine by Src family kinases like SRC and LCK and by receptor like CSF3R, EGFR and INSR upon stimulation. Phosphorylated at Ser-503; mediates activity. Phosphorylated at Tyr-488; regulates activity. Phosphorylated at Tyr-488 by EGFR and INSR upon stimulation; this phosphorylation is Ser-503-phosphorylation-dependent; mediates cellular internalization; increases interaction with FASN. Phosphorylated at Tyr-488 and Tyr-513 by LCK; mediates PTPN6 association and is regulated by homophilic ligation of CEACAM1 in the absence of T-cell activation. Phosphorylated at Tyr-513; mediates interaction with PTPN11. Phosphorylated on serine and threonine. In terms of tissue distribution, expressed in epithelia, vessel endothelia, leukocytes and platelets. Isoform 1 and isoform 2 are highly expressed in liver and intestine, moderately in lung, and weakly in muscle, kidney, and spleen. Expressed in granulocytes, lymphocytes, granulocytes, B cells, and T-cells.

The protein resides in the cell membrane. Its subcellular location is the lateral cell membrane. The protein localises to the apical cell membrane. It localises to the basal cell membrane. It is found in the cell junction. The protein resides in the adherens junction. Its subcellular location is the cytoplasmic vesicle. The protein localises to the secretory vesicle. It localises to the cell projection. It is found in the microvillus membrane. Cell adhesion protein that mediates homophilic cell adhesion in a calcium-independent manner. Plays a role as coinhibitory receptor in immune response, insulin action and also functions as an activator during angiogenesis. Its coinhibitory receptor function is phosphorylation- and PTPN6 -dependent, which in turn, suppress signal transduction of associated receptors by dephosphorylation of their downstream effectors. Plays a role in immune response, of T-cells, natural killer (NK) and neutrophils. Upon TCR/CD3 complex stimulation, inhibits TCR-mediated cytotoxicity by blocking granule exocytosis by mediating homophilic binding to adjacent cells, allowing interaction with and phosphorylation by LCK and interaction with the TCR/CD3 complex which recruits PTPN6 resulting in dephosphorylation of CD247 and ZAP70. Also inhibits T-cell proliferation and cytokine production through inhibition of JNK cascade and plays a crucial role in regulating autoimmunity and anti-tumor immunity by inhibiting T-cell through its interaction with HAVCR2. Upon natural killer (NK) cells activation, inhibit KLRK1-mediated cytolysis of CEACAM1-bearing tumor cells by trans-homophilic interactions with CEACAM1 on the target cell and lead to cis-interaction between CEACAM1 and KLRK1, allowing PTPN6 recruitment and then VAV1 dephosphorylation. Upon neutrophils activation negatively regulates IL1B production by recruiting PTPN6 to a SYK-TLR4-CEACAM1 complex, that dephosphorylates SYK, reducing the production of reactive oxygen species (ROS) and lysosome disruption, which in turn, reduces the activity of the inflammasome. Down-regulates neutrophil production by acting as a coinhibitory receptor for CSF3R by downregulating the CSF3R-STAT3 pathway through recruitment of PTPN6 that dephosphorylates CSF3R. Also regulates insulin action by promoting INS clearance and regulating lipogenesis in liver through regulating insulin signaling. Upon INS stimulation, undergoes phosphorylation by INSR leading to INS clearance by increasing receptor-mediated insulin endocytosis. This inernalization promotes interaction with FASN leading to receptor-mediated insulin degradation and to reduction of FASN activity leading to negative regulation of fatty acid synthesis. INSR-mediated phosphorylation also provokes a down-regulation of cell proliferation through SHC1 interaction resulting in decrease coupling of SHC1 to the MAPK3/ERK1-MAPK1/ERK2 and phosphatidylinositol 3-kinase pathways. Functions as activator in angiogenesis by promoting blood vessel remodeling through endothelial cell differentiation and migration and in arteriogenesis by increasing the number of collateral arteries and collateral vessel calibers after ischemia. Also regulates vascular permeability through the VEGFR2 signaling pathway resulting in control of nitric oxide production. Down-regulates cell growth in response to EGF through its interaction with SHC1 that mediates interaction with EGFR resulting in decrease coupling of SHC1 to the MAPK3/ERK1-MAPK1/ERK2 pathway. Negatively regulates platelet aggregation by decreasing platelet adhesion on type I collagen through the GPVI-FcRgamma complex. Inhibits cell migration and cell scattering through interaction with FLNA; interferes with the interaction of FLNA with RALA. Mediates bile acid transport activity in a phosphorylation dependent manner. Negatively regulates osteoclastogenesis. Functionally, cell adhesion proteins that mediates homophilic cell adhesion in a calcium-independent manner. Promotes populations of T-cells regulating IgA production and secretion associated with control of the commensal microbiota and resistance to enteropathogens. The chain is Cell adhesion molecule CEACAM1 from Rattus norvegicus (Rat).